The chain runs to 334 residues: Holliday junction branch migration complex subunit RuvB (334 aa).

A large ATPase domain (RuvB-L) region spans residues 4–184 (ADRLISAAVI…FGIVQRLEFY (181 aa)). ATP-binding positions include I23, R24, G65, K68, T69, T70, 131–133 (EDY), R174, Y184, and R221. T69 is a Mg(2+) binding site. Residues 185–255 (PVADLEHIVS…VAMKALDMLN (71 aa)) form a small ATPAse domain (RuvB-S) region. The head domain (RuvB-H) stretch occupies residues 258–334 (AEGFDFMDRK…YKHFGITREE (77 aa)). DNA-binding residues include R294, R313, and R318.

It belongs to the RuvB family. In terms of assembly, homohexamer. Forms an RuvA(8)-RuvB(12)-Holliday junction (HJ) complex. HJ DNA is sandwiched between 2 RuvA tetramers; dsDNA enters through RuvA and exits via RuvB. An RuvB hexamer assembles on each DNA strand where it exits the tetramer. Each RuvB hexamer is contacted by two RuvA subunits (via domain III) on 2 adjacent RuvB subunits; this complex drives branch migration. In the full resolvosome a probable DNA-RuvA(4)-RuvB(12)-RuvC(2) complex forms which resolves the HJ.

The protein resides in the cytoplasm. It catalyses the reaction ATP + H2O = ADP + phosphate + H(+). In terms of biological role, the RuvA-RuvB-RuvC complex processes Holliday junction (HJ) DNA during genetic recombination and DNA repair, while the RuvA-RuvB complex plays an important role in the rescue of blocked DNA replication forks via replication fork reversal (RFR). RuvA specifically binds to HJ cruciform DNA, conferring on it an open structure. The RuvB hexamer acts as an ATP-dependent pump, pulling dsDNA into and through the RuvAB complex. RuvB forms 2 homohexamers on either side of HJ DNA bound by 1 or 2 RuvA tetramers; 4 subunits per hexamer contact DNA at a time. Coordinated motions by a converter formed by DNA-disengaged RuvB subunits stimulates ATP hydrolysis and nucleotide exchange. Immobilization of the converter enables RuvB to convert the ATP-contained energy into a lever motion, pulling 2 nucleotides of DNA out of the RuvA tetramer per ATP hydrolyzed, thus driving DNA branch migration. The RuvB motors rotate together with the DNA substrate, which together with the progressing nucleotide cycle form the mechanistic basis for DNA recombination by continuous HJ branch migration. Branch migration allows RuvC to scan DNA until it finds its consensus sequence, where it cleaves and resolves cruciform DNA. This is Holliday junction branch migration complex subunit RuvB from Yersinia pestis bv. Antiqua (strain Angola).